The sequence spans 342 residues: DNA-directed RNA polymerase subunit alpha (342 aa).

Residues 1-239 form an alpha N-terminal domain (alpha-NTD) region; it reads MTTFLAKNWS…DQLQVFINFQ (239 aa). The tract at residues 254-342 is alpha C-terminal domain (alpha-CTD); sequence INPVLLKKVY…SLAKKHEDQY (89 aa).

Belongs to the RNA polymerase alpha chain family. In terms of assembly, homodimer. The RNAP catalytic core consists of 2 alpha, 1 beta, 1 beta' and 1 omega subunit. When a sigma factor is associated with the core the holoenzyme is formed, which can initiate transcription.

It catalyses the reaction RNA(n) + a ribonucleoside 5'-triphosphate = RNA(n+1) + diphosphate. Functionally, DNA-dependent RNA polymerase catalyzes the transcription of DNA into RNA using the four ribonucleoside triphosphates as substrates. This chain is DNA-directed RNA polymerase subunit alpha, found in Orientia tsutsugamushi (strain Ikeda) (Rickettsia tsutsugamushi).